A 134-amino-acid chain; its full sequence is Phosphoribosyl-AMP cyclohydrolase (134 aa).

Mg(2+) is bound at residue Asp-77. Cys-78 lines the Zn(2+) pocket. Residues Asp-79 and Asp-81 each contribute to the Mg(2+) site. Residues Cys-95 and Cys-102 each coordinate Zn(2+).

It belongs to the PRA-CH family. As to quaternary structure, homodimer. Mg(2+) is required as a cofactor. Zn(2+) serves as cofactor.

The protein localises to the cytoplasm. The enzyme catalyses 1-(5-phospho-beta-D-ribosyl)-5'-AMP + H2O = 1-(5-phospho-beta-D-ribosyl)-5-[(5-phospho-beta-D-ribosylamino)methylideneamino]imidazole-4-carboxamide. It participates in amino-acid biosynthesis; L-histidine biosynthesis; L-histidine from 5-phospho-alpha-D-ribose 1-diphosphate: step 3/9. In terms of biological role, catalyzes the hydrolysis of the adenine ring of phosphoribosyl-AMP. The protein is Phosphoribosyl-AMP cyclohydrolase of Pseudomonas paraeruginosa (strain DSM 24068 / PA7) (Pseudomonas aeruginosa (strain PA7)).